The following is a 343-amino-acid chain: Major histocompatibility complex class I-related protein 1 (343 aa).

Positions 1–18 (MMFLLPFLTVFLAKQSHT) are cleaved as a signal peptide. The tract at residues 19 to 105 (RTHSLRYFRL…RHLQRHYNHS (87 aa)) is alpha-1. The interval 19 to 197 (RTHSLRYFRL…EYGSDALERT (179 aa)) is antigen-binding cleft. At 19–298 (RTHSLRYFRL…QESGNTLLVA (280 aa)) the chain is on the extracellular side. Positions 25 and 27 each coordinate 8-(9H-purin-6-yl)-2-oxa-8-azabicyclo[3.3.1]nona-3,6-diene-4,6-dicarbaldehyde. 5-(2-oxoethylideneamino)-6-(D-ribitylamino)uracil contacts are provided by arginine 27, serine 42, and lysine 61. Residues arginine 27, serine 42, and lysine 61 each coordinate 5-(2-oxopropylideneamino)-6-(D-ribitylamino)uracil. Arginine 27, serine 42, and lysine 61 together coordinate 7-hydroxy-6-methyl-8-(1-D-ribityl)lumazine. Residues lysine 61 and histidine 76 each coordinate 8-(9H-purin-6-yl)-2-oxa-8-azabicyclo[3.3.1]nona-3,6-diene-4,6-dicarbaldehyde. Lysine 61 contacts 2-amino-4-oxopteridine-6-carbaldehyde. Lysine 61 contacts pyridoxal. Asparagine 103 is a glycosylation site (N-linked (GlcNAc...) asparagine). Residues 106–197 (GLHTYQRMIG…EYGSDALERT (92 aa)) form an alpha-2 region. Arginine 112 provides a ligand contact to 8-(9H-purin-6-yl)-2-oxa-8-azabicyclo[3.3.1]nona-3,6-diene-4,6-dicarbaldehyde. The 5-(2-oxoethylideneamino)-6-(D-ribitylamino)uracil site is built by arginine 112, tyrosine 170, and glutamine 171. Residues arginine 112, tyrosine 170, and glutamine 171 each contribute to the 5-(2-oxopropylideneamino)-6-(D-ribitylamino)uracil site. 7-hydroxy-6-methyl-8-(1-D-ribityl)lumazine is bound by residues arginine 112, tyrosine 170, and glutamine 171. Cystine bridges form between cysteine 116-cysteine 179 and cysteine 218-cysteine 274. The alpha-3 stretch occupies residues 198 to 289 (EHPVVRTTRK…GLQMVLEAPQ (92 aa)). The Ig-like C1-type domain occupies 200–302 (PVVRTTRKET…NTLLVANTIS (103 aa)). The connecting peptide stretch occupies residues 290–298 (ESGNTLLVA). Residues 299–319 (NTISGTIILIIVLAGVGALIW) form a helical membrane-spanning segment. Over 320–343 (RRRSREPKEVMYQPTQVNEGSSPS) the chain is Cytoplasmic.

As to quaternary structure, heterotrimer that consists of MR1, B2M and metabolite antigen. Major classes of metabolite ligands presented by MR1 include riboflavin-related antigens, pyrimidines and ribityl lumazines, nucleobase adducts and folate derivatives. Forms reversible covalent Schiff base complexes with microbial pyrimidine-based metabolite, which serves as a molecular switch triggering complete folding, stable association with B2M and translocation of the ternary complex from endoplasmic reticulum to the plasma membrane. Alternatively, forms non-Schiff base complexes with ribityl lumazines. On antigen-presenting cells, the ternary complex interacts with TCR on MR1-restricted T cells. Interacts with TAPBP and TAPBPL chaperones in the endoplasmic reticulum. TAPBP associated or not with MHC class I peptide loading complex binds ligand-free MR1 or MR1-B2M complex, providing for stable MR1 pools ready for metabolite antigen processing. TAPBPL interacts with MR1 in a ligand-independent way; this interaction may stabilize MR1 pool and facilitate ligand loading and dissociation. Structurally, MR1-B2M heterodimer adopts a topology similar to classical MHC class I molecules, with alpha-1 and alpha-2 domains of MR1 forming the antigen-binding cleft composed of two alpha-helices resting on a floor of 7-stranded anti-parallel beta-pleated sheet. MR1-B2M heterodimer (via alpha-helices) interacts with TCR (via CDR domains). In terms of processing, N-glycosylated. Expressed in kidney, liver, testis, spleen, thymus, brain, and heart.

The protein localises to the cell membrane. It is found in the endoplasmic reticulum membrane. The protein resides in the golgi apparatus membrane. It localises to the early endosome membrane. Its subcellular location is the late endosome membrane. Its function is as follows. Antigen-presenting molecule specialized in displaying microbial pyrimidine-based metabolites to alpha-beta T cell receptors (TCR) on innate-type mucosal-associated invariant T (MAIT) cells. In complex with B2M preferentially presents riboflavin-derived metabolites to semi-invariant TCRs on MAIT cells, guiding immune surveillance of the microbial metabolome at mucosal epithelial barriers. Signature pyrimidine-based microbial antigens are generated via non-enzymatic condensation of metabolite intermediates of the riboflavin pathway with by-products arising from other metabolic pathways such as glycolysis. Typical potent antigenic metabolites are 5-(2-oxoethylideneamino)-6-D-ribitylaminouracil (5-OE-RU) and 5-(2-oxopropylideneamino)-6-D-ribitylaminouracil (5-OP-RU), products of condensation of 5-amino-6-D-ribityaminouracil (5-A-RU) with glyoxal or methylglyoxal by-products, respectively. May present microbial antigens to various MAIT cell subsets, providing for unique recognition of diverse microbes, including pathogens that do not synthesize riboflavin. Upon antigen recognition, elicits rapid innate-type MAIT cell activation to eliminate pathogenic microbes by directly killing infected cells. During T cell development, drives thymic selection and post-thymic terminal differentiation of MAIT cells in a process dependent on commensal microflora. Acts as an immune sensor of cancer cell metabolome. May present a tumor-specific or -associated metabolite essential for cancer cell survival to a pan-cancer TCR on a non-MAIT CD8-positive T cell clone, triggering T cell-mediated killing of a wide range of cancer cell types. May present tumor-enriched pyridoxal and pyridoxal 5'-phosphate antigens, enabling preferential recognition of cancer cells. Presents nucleobase carbonyl adducts generated during oxidative stress. Captures M3Ade, a nucleobase adduct composed of one adenine modified by a malondialdehyde trimer, for recognition by MR1-restricted T cell clones expressing a polyclonal TCR repertoire. The polypeptide is Major histocompatibility complex class I-related protein 1 (Rattus norvegicus (Rat)).